We begin with the raw amino-acid sequence, 197 residues long: ADP-ribosylation factor-like protein 6-interacting protein 1 (197 aa).

The next 4 membrane-spanning stretches (helical) occupy residues 43–63 (VVFG…LSLI), 64–84 (TLLS…PMVS), 129–149 (TVFV…GAII), and 150–170 (NNLL…GLQN).

Belongs to the ARL6ip family.

Its subcellular location is the membrane. The chain is ADP-ribosylation factor-like protein 6-interacting protein 1 from Drosophila melanogaster (Fruit fly).